Reading from the N-terminus, the 577-residue chain is CDPK-related kinase 7 (577 aa).

The segment at 1 to 38 (MGLCHGKPIEQQSKNLPISNEIEETPKNSSQKAKSSGF) is disordered. The N-myristoyl glycine moiety is linked to residue Gly-2. In terms of domain architecture, Protein kinase spans 124-386 (YEIDGEVGRG…AAQALCHPWL (263 aa)). ATP is bound by residues 130 to 138 (VGRGHFGYT) and Lys-156. The Proton acceptor role is filled by Asp-252. A Phosphoserine modification is found at Ser-292. At Ser-334 the chain carries Phosphoserine; by CPK1, CPK10 and CPK34. The autoinhibitory domain stretch occupies residues 391–421 (ELKIPSDMIIYKLVKVYIMSSSLRKSALAAL). A calmodulin binding (CaMBD) region spans residues 410 to 430 (SSSLRKSALAALAKTLTVPQL). EF-hand domains lie at 428 to 464 (PQLT…STEA), 465 to 500 (TKDS…VYQL), 501 to 540 (EAME…GPSV), and 543 to 572 (HVVL…VSSR). Positions 443, 445, 447, 484, 489, 520, 522, 529, 554, and 556 each coordinate Ca(2+). Ser-558 carries the phosphoserine modification.

Belongs to the protein kinase superfamily. Ser/Thr protein kinase family. CDPK subfamily. In terms of assembly, binds calmodulin (CaM) in a calcium-dependent manner. In terms of processing, autophosphorylated.

It is found in the membrane. The catalysed reaction is L-seryl-[protein] + ATP = O-phospho-L-seryl-[protein] + ADP + H(+). It catalyses the reaction L-threonyl-[protein] + ATP = O-phospho-L-threonyl-[protein] + ADP + H(+). Activated by calcium and calmodulin. Autophosphorylation may play an important role in the regulation of the kinase activity. May play a role in signal transduction pathways that involve calcium as a second messenger. This is CDPK-related kinase 7 (CRK7) from Arabidopsis thaliana (Mouse-ear cress).